Reading from the N-terminus, the 163-residue chain is NADH-quinone oxidoreductase subunit I (163 aa).

2 consecutive 4Fe-4S ferredoxin-type domains span residues 53-83 and 94-123; these read LRRY…IEAG and TLYD…LTPE. Residues Cys63, Cys66, Cys69, Cys73, Cys103, Cys106, Cys109, and Cys113 each coordinate [4Fe-4S] cluster.

The protein belongs to the complex I 23 kDa subunit family. NDH-1 is composed of 14 different subunits. Subunits NuoA, H, J, K, L, M, N constitute the membrane sector of the complex. Requires [4Fe-4S] cluster as cofactor.

It is found in the cell inner membrane. It carries out the reaction a quinone + NADH + 5 H(+)(in) = a quinol + NAD(+) + 4 H(+)(out). Its function is as follows. NDH-1 shuttles electrons from NADH, via FMN and iron-sulfur (Fe-S) centers, to quinones in the respiratory chain. The immediate electron acceptor for the enzyme in this species is believed to be ubiquinone. Couples the redox reaction to proton translocation (for every two electrons transferred, four hydrogen ions are translocated across the cytoplasmic membrane), and thus conserves the redox energy in a proton gradient. This chain is NADH-quinone oxidoreductase subunit I, found in Coxiella burnetii (strain Dugway 5J108-111).